Reading from the N-terminus, the 491-residue chain is Conidiogenone synthase PchP450 (491 aa).

The helical transmembrane segment at 2 to 22 (LLLWFGFFSFVCGLVIYRLQF) threads the bilayer. Cys-430 lines the heme pocket.

This sequence belongs to the cytochrome P450 family. Requires heme as cofactor.

Its subcellular location is the membrane. Its pathway is secondary metabolite biosynthesis; terpenoid biosynthesis. Functionally, cytochrome P450 monooxygenase; part of the gene cluster that mediates the biosynthesis of conidiogenone, a diterpene known to induce the conidiation. The bifunctional terpene synthase PrDS converts isopentenyl diphosphate (IPP) and dimethylallyl diphosphate (DMAPP) into deoxyconidiogenol. The C-terminal prenyltransferase (PT) domain of PrDS catalyzes formation of GGPP, whereas the N-terminal terpene cyclase (TC) domain catalyzes the cyclization of GGPP into deoxyconidiogenol. The cytochrome P450 monooxygenase PrP450 then catalyzes two rounds of oxidation to furnish conidiogenone. This chain is Conidiogenone synthase PchP450, found in Penicillium rubens (strain ATCC 28089 / DSM 1075 / NRRL 1951 / Wisconsin 54-1255) (Penicillium chrysogenum).